The chain runs to 131 residues: Large ribosomal subunit protein bL17 (131 aa).

It belongs to the bacterial ribosomal protein bL17 family. Part of the 50S ribosomal subunit. Contacts protein L32.

The chain is Large ribosomal subunit protein bL17 from Janthinobacterium sp. (strain Marseille) (Minibacterium massiliensis).